The primary structure comprises 96 residues: ATP synthase subunit c (96 aa).

The next 2 helical transmembrane spans lie at 26–46 and 68–88; these read GLVL…CGIG and IMVT…YALV.

It belongs to the ATPase C chain family. In terms of assembly, F-type ATPases have 2 components, F(1) - the catalytic core - and F(0) - the membrane proton channel. F(1) has five subunits: alpha(3), beta(3), gamma(1), delta(1), epsilon(1). F(0) has three main subunits: a(1), b(2) and c(10-14). The alpha and beta chains form an alternating ring which encloses part of the gamma chain. F(1) is attached to F(0) by a central stalk formed by the gamma and epsilon chains, while a peripheral stalk is formed by the delta and b chains.

The protein resides in the cell inner membrane. F(1)F(0) ATP synthase produces ATP from ADP in the presence of a proton or sodium gradient. F-type ATPases consist of two structural domains, F(1) containing the extramembraneous catalytic core and F(0) containing the membrane proton channel, linked together by a central stalk and a peripheral stalk. During catalysis, ATP synthesis in the catalytic domain of F(1) is coupled via a rotary mechanism of the central stalk subunits to proton translocation. Its function is as follows. Key component of the F(0) channel; it plays a direct role in translocation across the membrane. A homomeric c-ring of between 10-14 subunits forms the central stalk rotor element with the F(1) delta and epsilon subunits. The polypeptide is ATP synthase subunit c (Oleidesulfovibrio alaskensis (strain ATCC BAA-1058 / DSM 17464 / G20) (Desulfovibrio alaskensis)).